A 58-amino-acid polypeptide reads, in one-letter code: Large ribosomal subunit protein bL33 (58 aa).

This sequence belongs to the bacterial ribosomal protein bL33 family.

The polypeptide is Large ribosomal subunit protein bL33 (Brachyspira hyodysenteriae (strain ATCC 49526 / WA1)).